We begin with the raw amino-acid sequence, 410 residues long: Toluene 1,2-dioxygenase system ferredoxin--NAD(+) reductase component (410 aa).

Residue 4-35 participates in FAD binding; sequence HVAIIGNGVGGFTTAQALRAEGFEGRISLIGD. Position 145-173 (145-173) interacts with NAD(+); the sequence is RLLIVGGGLIGCEVATTARKLGLSVTILE.

Belongs to the bacterial ring-hydroxylating dioxygenase ferredoxin reductase family. As to quaternary structure, this dioxygenase system consists of four proteins: the two subunits of the hydroxylase component (todC1 and todC2), a ferredoxin (TodB) and a ferredoxin reductase (TodA). FAD is required as a cofactor.

The enzyme catalyses 2 reduced [2Fe-2S]-[ferredoxin] + NAD(+) + H(+) = 2 oxidized [2Fe-2S]-[ferredoxin] + NADH. The protein operates within xenobiotic degradation; toluene degradation. Functionally, part of the electron transfer component of toluene 1,2-dioxygenase, transfers electrons from ferredoxin (TodB) to NADH. The chain is Toluene 1,2-dioxygenase system ferredoxin--NAD(+) reductase component (todA) from Pseudomonas putida (strain ATCC 700007 / DSM 6899 / JCM 31910 / BCRC 17059 / LMG 24140 / F1).